Consider the following 470-residue polypeptide: MAGGVTGGSAEGWSKRFEEGLHPVIERFNASISFDITLLQEDLDGSIAHARMLGECGVISLEEAAQLEGGLEKIRSEAAAGEFQPGLVDEDVHFAVERRLIALLGPVGKKLHTGRSRNDQVGTDLRLWLRRRLDDLDCELERFQNALLTQAESHRQTLIPGYTHLQRAQPLCLAHHLLAYIEMIQRDRDRLKDVRGRVNISPLGAAALAGTSVPIDRQNTAAALGFECIYANSLDAVSDRDFAVEYTAAASLVMVHLSRLAEEVIFWASEEFAFVRLSDRCATGSSLMPQKKNPDVPELVRGKCGRVFGHLQGLLTMIKGLPLAYNKDFQEDKEALFDTVRTTKDCVEAMSILMEQGLEFCSERLAAAVESDFSNATDVADYLVAKGVPFREAYQLVGAVVKRCLDEGILLCDLSLEQWQEFHSAIAEDLHEALAPKRVVAVRISEGGTGFDRVEEQLRHWRSRLDSGVS.

This sequence belongs to the lyase 1 family. Argininosuccinate lyase subfamily.

The protein resides in the cytoplasm. It carries out the reaction 2-(N(omega)-L-arginino)succinate = fumarate + L-arginine. It participates in amino-acid biosynthesis; L-arginine biosynthesis; L-arginine from L-ornithine and carbamoyl phosphate: step 3/3. The sequence is that of Argininosuccinate lyase from Prochlorococcus marinus (strain MIT 9303).